A 432-amino-acid chain; its full sequence is Enolase (432 aa).

Glutamine 163 is a (2R)-2-phosphoglycerate binding site. Glutamate 205 serves as the catalytic Proton donor. Positions 242, 287, and 314 each coordinate Mg(2+). Residues lysine 339, arginine 368, serine 369, and lysine 390 each contribute to the (2R)-2-phosphoglycerate site. Catalysis depends on lysine 339, which acts as the Proton acceptor.

Belongs to the enolase family. Mg(2+) is required as a cofactor.

The protein localises to the cytoplasm. It localises to the secreted. The protein resides in the cell surface. The enzyme catalyses (2R)-2-phosphoglycerate = phosphoenolpyruvate + H2O. Its pathway is carbohydrate degradation; glycolysis; pyruvate from D-glyceraldehyde 3-phosphate: step 4/5. Functionally, catalyzes the reversible conversion of 2-phosphoglycerate (2-PG) into phosphoenolpyruvate (PEP). It is essential for the degradation of carbohydrates via glycolysis. The sequence is that of Enolase from Myxococcus xanthus (strain DK1622).